We begin with the raw amino-acid sequence, 148 residues long: Transcriptional regulator MraZ (148 aa).

SpoVT-AbrB domains follow at residues 5-51 (AAAL…PSPA) and 80-123 (ARTE…SEAG).

Belongs to the MraZ family. Forms oligomers.

It localises to the cytoplasm. It is found in the nucleoid. The sequence is that of Transcriptional regulator MraZ from Dechloromonas aromatica (strain RCB).